The primary structure comprises 286 residues: 2,3,4,5-tetrahydropyridine-2,6-dicarboxylate N-succinyltransferase (286 aa).

This sequence belongs to the transferase hexapeptide repeat family.

It is found in the cytoplasm. The enzyme catalyses (S)-2,3,4,5-tetrahydrodipicolinate + succinyl-CoA + H2O = (S)-2-succinylamino-6-oxoheptanedioate + CoA. Its pathway is amino-acid biosynthesis; L-lysine biosynthesis via DAP pathway; LL-2,6-diaminopimelate from (S)-tetrahydrodipicolinate (succinylase route): step 1/3. This is 2,3,4,5-tetrahydropyridine-2,6-dicarboxylate N-succinyltransferase from Rhizobium leguminosarum bv. trifolii (strain WSM2304).